The following is a 696-amino-acid chain: DNA-directed RNA polymerase subunit beta N-terminal section (696 aa).

It belongs to the RNA polymerase beta chain family. As to quaternary structure, in plastids the minimal PEP RNA polymerase catalytic core is composed of four subunits: alpha, beta, beta', and beta''. When a (nuclear-encoded) sigma factor is associated with the core the holoenzyme is formed, which can initiate transcription.

The protein resides in the plastid. It is found in the chloroplast. The catalysed reaction is RNA(n) + a ribonucleoside 5'-triphosphate = RNA(n+1) + diphosphate. Functionally, DNA-dependent RNA polymerase catalyzes the transcription of DNA into RNA using the four ribonucleoside triphosphates as substrates. In Stigeoclonium helveticum (Green alga), this protein is DNA-directed RNA polymerase subunit beta N-terminal section (rpoB1).